The following is a 326-amino-acid chain: Acyl-CoA-binding domain-containing protein 4 (326 aa).

The ACB domain occupies 10-99 (CQKQFQAAVS…MKLVAQKVID (90 aa)). Residues 21 to 30 (IQNLPKNGSY), 41 to 45 (YSYYK), lysine 67, and tyrosine 86 each bind an acyl-CoA. 2 disordered regions span residues 147-170 (VQAA…SRLP) and 223-248 (KEAA…SLMG). Residue serine 164 is modified to Phosphoserine.

Functionally, binds medium- and long-chain acyl-CoA esters and may function as an intracellular carrier of acyl-CoA esters. This chain is Acyl-CoA-binding domain-containing protein 4 (Acbd4), found in Rattus norvegicus (Rat).